A 471-amino-acid polypeptide reads, in one-letter code: MAPADGESSPPPHVAVVAFPFSSHAAVLLSIARALAAAAAPSGATLSFLSTASSLAQLRKASSASAGHGLPGNLRFVEVPDGAPAAEETVPVPRQMQLFMEAAEAGGVKAWLEAARAAAGGARVTCVVGDAFVWPAADAAASAGAPWVPVWTAASCALLAHIRTDALREDVGDQAANRVDGLLISHPGLASYRVRDLPDGVVSGDFNYVINLLVHRMGQCLPRSAAAVALNTFPGLDPPDVTAALAEILPNCVPFGPYHLLLAEDDADTAAPADPHGCLAWLGRQPARGVAYVSFGTVACPRPDELRELAAGLEDSGAPFLWSLREDSWPHLPPGFLDRAAGTGSGLVVPWAPQVAVLRHPSVGAFVTHAGWASVLEGLSSGVPMACRPFFGDQRMNARSVAHVWGFGAAFEGAMTSAGVATAVEELLRGEEGARMRARAKELQALVAEAFGPGGECRKNFDRFVEIVCRA.

The Proton acceptor role is filled by H24. An an anthocyanidin-binding site is contributed by H24. D130 acts as the Charge relay in catalysis. T152 is a UDP-alpha-D-glucose binding site. H161 contributes to the an anthocyanidin binding site. UDP-alpha-D-glucose-binding residues include A352, Q354, H369, W372, S374, and E377. G392 is a binding site for an anthocyanidin. 2 residues coordinate UDP-alpha-D-glucose: D393 and Q394.

It belongs to the UDP-glycosyltransferase family.

The catalysed reaction is an anthocyanidin + UDP-alpha-D-glucose + H(+) = an anthocyanidin 3-O-beta-D-glucoside + UDP. Its pathway is pigment biosynthesis; anthocyanin biosynthesis. In terms of biological role, in the presence of other necessary color factors, this glycosylation reaction allows the accumulation of anthocyanin pigments. This is Anthocyanidin 3-O-glucosyltransferase (BZ1) from Zea mays (Maize).